A 167-amino-acid polypeptide reads, in one-letter code: Signal peptidase complex catalytic subunit SEC11 (167 aa).

At 1–12 (MNLRLELTRFLK) the chain is on the cytoplasmic side. A helical; Signal-anchor for type II membrane protein membrane pass occupies residues 13-30 (LCFVLSSAFMFWKGLSIA). Topologically, residues 31 to 167 (TNSHSPIVVV…LGISALLSNE (137 aa)) are lumenal. Residues Ser44, His83, and Asp109 each act as charge relay system in the active site. Positions 153–164 (ALMGFLGISALL) are C-terminal short (CTS) helix.

It belongs to the peptidase S26B family. As to quaternary structure, component of the signal peptidase complex (SPC) composed of a catalytic subunit SEC11 and three accessory subunits SPC1, SPC2 and SPC3. The complex induces a local thinning of the ER membrane which is used to measure the length of the signal peptide (SP) h-region of protein substrates. This ensures the selectivity of the complex towards h-regions shorter than 18-20 amino acids. SPC associates with the translocon complex.

It localises to the endoplasmic reticulum membrane. The enzyme catalyses Cleavage of hydrophobic, N-terminal signal or leader sequences from secreted and periplasmic proteins.. Its function is as follows. Catalytic component of the signal peptidase complex (SPC) which catalyzes the cleavage of N-terminal signal sequences from nascent proteins as they are translocated into the lumen of the endoplasmic reticulum. Specifically cleaves N-terminal signal peptides that contain a hydrophobic alpha-helix (h-region) shorter than 18-20 amino acids. In Zygosaccharomyces rouxii (strain ATCC 2623 / CBS 732 / NBRC 1130 / NCYC 568 / NRRL Y-229), this protein is Signal peptidase complex catalytic subunit SEC11 (SEC11).